The following is a 324-amino-acid chain: Fructose-1,6-bisphosphatase class 1 (324 aa).

Residues E88, D107, L109, and D110 each coordinate Mg(2+). Residues 110-113, N199, and K265 each bind substrate; that span reads DGSS. E271 contacts Mg(2+).

The protein belongs to the FBPase class 1 family. As to quaternary structure, homotetramer. It depends on Mg(2+) as a cofactor.

Its subcellular location is the cytoplasm. The catalysed reaction is beta-D-fructose 1,6-bisphosphate + H2O = beta-D-fructose 6-phosphate + phosphate. It functions in the pathway carbohydrate biosynthesis; gluconeogenesis. The sequence is that of Fructose-1,6-bisphosphatase class 1 from Neisseria meningitidis serogroup C (strain 053442).